The sequence spans 225 residues: Small ribosomal subunit protein uS3 (225 aa).

In terms of domain architecture, KH type-2 spans 38-106; the sequence is LRKFLQGKLQ…EVSLNIVEIR (69 aa).

Belongs to the universal ribosomal protein uS3 family. Part of the 30S ribosomal subunit. Forms a tight complex with proteins S10 and S14.

In terms of biological role, binds the lower part of the 30S subunit head. Binds mRNA in the 70S ribosome, positioning it for translation. The polypeptide is Small ribosomal subunit protein uS3 (Rhodospirillum centenum (strain ATCC 51521 / SW)).